Consider the following 493-residue polypeptide: Glutamyl-tRNA(Gln) amidotransferase subunit A (493 aa).

Catalysis depends on charge relay system residues K78 and S158. The Acyl-ester intermediate role is filled by S182.

It belongs to the amidase family. GatA subfamily. Heterotrimer of A, B and C subunits.

The enzyme catalyses L-glutamyl-tRNA(Gln) + L-glutamine + ATP + H2O = L-glutaminyl-tRNA(Gln) + L-glutamate + ADP + phosphate + H(+). Allows the formation of correctly charged Gln-tRNA(Gln) through the transamidation of misacylated Glu-tRNA(Gln) in organisms which lack glutaminyl-tRNA synthetase. The reaction takes place in the presence of glutamine and ATP through an activated gamma-phospho-Glu-tRNA(Gln). This chain is Glutamyl-tRNA(Gln) amidotransferase subunit A, found in Rickettsia typhi (strain ATCC VR-144 / Wilmington).